A 221-amino-acid chain; its full sequence is Urease accessory protein UreF (221 aa).

This sequence belongs to the UreF family. UreD, UreF and UreG form a complex that acts as a GTP-hydrolysis-dependent molecular chaperone, activating the urease apoprotein by helping to assemble the nickel containing metallocenter of UreC. The UreE protein probably delivers the nickel.

Its subcellular location is the cytoplasm. Functionally, required for maturation of urease via the functional incorporation of the urease nickel metallocenter. The chain is Urease accessory protein UreF from Microcystis aeruginosa (strain NIES-843 / IAM M-2473).